The sequence spans 406 residues: Putative permease Rv2963 (406 aa).

Transmembrane regions (helical) follow at residues 30–50, 67–87, 111–131, 132–152, 208–228, 246–266, 278–298, 312–332, and 361–381; these read WEILWALILGFALSAVVQAVV, LVIATGLGAASSSCSYAAVAL, LVVELGIILALLMGWQFTAAE, FVGGPIMILVLAVLFRLFVGA, LAILRDLILGLLIAGAIAAWV, AVWGPIIGPIVAIVSFVCSIG, GISFGGVIAFIFADLLILPIL, VLLGTFYASMVVAGYLIELLF, and VIFLVIAAALVVRFITSGGLP.

It belongs to the UPF0718 family.

The protein localises to the cell membrane. In Mycobacterium tuberculosis (strain ATCC 25618 / H37Rv), this protein is Putative permease Rv2963.